The sequence spans 298 residues: NAD kinase (298 aa).

Catalysis depends on D80, which acts as the Proton acceptor. NAD(+) is bound by residues 80–81, 154–155, R182, D184, 195–200, A219, and Q253; these read DG, ND, and TAYALS.

Belongs to the NAD kinase family. Requires a divalent metal cation as cofactor.

It localises to the cytoplasm. The catalysed reaction is NAD(+) + ATP = ADP + NADP(+) + H(+). Its function is as follows. Involved in the regulation of the intracellular balance of NAD and NADP, and is a key enzyme in the biosynthesis of NADP. Catalyzes specifically the phosphorylation on 2'-hydroxyl of the adenosine moiety of NAD to yield NADP. The sequence is that of NAD kinase from Paracidovorax citrulli (strain AAC00-1) (Acidovorax citrulli).